A 383-amino-acid polypeptide reads, in one-letter code: Large ribosomal subunit protein uL3 (383 aa).

It belongs to the universal ribosomal protein uL3 family.

Its subcellular location is the cytoplasm. This is Large ribosomal subunit protein uL3 (RPL3-1) from Encephalitozoon cuniculi (strain GB-M1) (Microsporidian parasite).